We begin with the raw amino-acid sequence, 333 residues long: Cysteine protease (333 aa).

Positions 1-18 (MKFLLVAALCALVAIGSC) are cleaved as a signal peptide. The propeptide at 19 to 108 (KPTREEIKTF…MEAAKEPLIN (90 aa)) is activation peptide. The N-linked (GlcNAc...) asparagine glycan is linked to N93. Disulfide bonds link C134–C182 and C168–C214. Residue C137 is part of the active site. Catalysis depends on residues H281 and N301.

The protein belongs to the peptidase C1 family. Homodimer.

Cysteine protease. The sequence is that of Cysteine protease from Blomia tropicalis (Mite).